A 300-amino-acid polypeptide reads, in one-letter code: Erythroblast NAD(P)(+)--arginine ADP-ribosyltransferase (300 aa).

A signal peptide spans 1-22 (MEEPLLHAILGLVLLLSTRTDA). 2 disulfides stabilise this stretch: Cys51–Cys260 and Cys159–Cys208. A TR mART core domain is found at 70 to 256 (ETFAEGWRSA…IQLRSQGKSS (187 aa)). 3 residues coordinate NAD(+): Tyr107, Arg164, and Gln183. The active site involves Arg164. Residue Ser186 is part of the active site. NAD(+) is bound at residue Ser217. Glu224 is a catalytic residue. Positions 276 to 300 (SADKSSPLPRSPWPGWAPLAAPHSH) are disordered.

It belongs to the Arg-specific ADP-ribosyltransferase family.

It carries out the reaction L-arginyl-[protein] + NAD(+) = N(omega)-(ADP-D-ribosyl)-L-arginyl-[protein] + nicotinamide + H(+). The chain is Erythroblast NAD(P)(+)--arginine ADP-ribosyltransferase (MADPRT) from Gallus gallus (Chicken).